Reading from the N-terminus, the 152-residue chain is ADP-ribose glycohydrolase OARD1 (152 aa).

An N-acetylalanine modification is found at Ala2. The Macro domain maps to 2 to 152 (ASSLNEDPEG…TDIKITVYTL (151 aa)). Ser4 bears the Phosphoserine mark. Residue Leu21 coordinates substrate. Catalysis depends on Lys84, which acts as the Nucleophile. Residues 119–125 (RIGCGLD) and Leu152 each bind substrate. Residue Asp125 is the Proton acceptor of the active site.

Ubiquitous.

The protein resides in the nucleus. It localises to the nucleoplasm. It is found in the nucleolus. Its subcellular location is the chromosome. The enzyme catalyses 2''-O-acetyl-ADP-D-ribose + H2O = ADP-D-ribose + acetate + H(+). It catalyses the reaction 5-O-(ADP-D-ribosyl)-L-glutamyl-[protein] + H2O = L-glutamyl-[protein] + ADP-D-ribose + H(+). The catalysed reaction is alpha-NAD(+) + H2O = ADP-D-ribose + nicotinamide + H(+). Its activity is regulated as follows. Subject to competitive inhibition by the product ADP-ribose. In terms of biological role, ADP-ribose glycohydrolase that hydrolyzes ADP-ribose and acts on different substrates, such as proteins ADP-ribosylated on glutamate and O-acetyl-ADP-D-ribose. Specifically acts as a glutamate mono-ADP-ribosylhydrolase by mediating the removal of mono-ADP-ribose attached to glutamate residues on proteins. Does not act on poly-ADP-ribosylated proteins: the poly-ADP-ribose chain of poly-ADP-ribosylated glutamate residues must by hydrolyzed into mono-ADP-ribosylated glutamate by PARG to become a substrate for OARD1. Deacetylates O-acetyl-ADP ribose, a signaling molecule generated by the deacetylation of acetylated lysine residues in histones and other proteins. Catalyzes the deacylation of O-acetyl-ADP-ribose, O-propionyl-ADP-ribose and O-butyryl-ADP-ribose, yielding ADP-ribose plus acetate, propionate and butyrate, respectively. This Homo sapiens (Human) protein is ADP-ribose glycohydrolase OARD1.